An 88-amino-acid chain; its full sequence is Conotoxin Ca8.3 (88 aa).

An N-terminal signal peptide occupies residues 1-21 (MMLKMGAMFVLLLLFILPSSQ). Positions 22–46 (QEGDVQARKTHLKSGFYGTLAMSTR) are excised as a propeptide.

It belongs to the conotoxin S superfamily. In terms of processing, contains 5 disulfide bonds. Expressed by the venom duct.

It is found in the secreted. This chain is Conotoxin Ca8.3, found in Conus caracteristicus (Characteristic cone).